The chain runs to 419 residues: Homeobox-containing protein 1 (419 aa).

Positions 18–49 (DEPRFTIEQIDLLQRLRRTGMTKHEILHALET) constitute an HNF-p1 domain. The tract at residues 56–152 (EHSDKFGRRS…GQRSYSFEAS (97 aa)) is disordered. Residue Lys-60 forms a Glycyl lysine isopeptide (Lys-Gly) (interchain with G-Cter in SUMO2) linkage. Composition is skewed to low complexity over residues 64–73 (RSSYGGSSYG) and 81–93 (ASSS…TQTQ). The span at 94–132 (HSGMSPSPSNSYDTSPLPCTTNQNGRENNDRLSTSNGKM) shows a compositional bias: polar residues. Lys-131 is covalently cross-linked (Glycyl lysine isopeptide (Lys-Gly) (interchain with G-Cter in SUMO2)). The POU-specific atypical domain maps to 145-241 (RSYSFEASEE…PGATLSMRPA (97 aa)). Ser-148 carries the post-translational modification Phosphoserine. Residue Lys-161 forms a Glycyl lysine isopeptide (Lys-Gly) (interchain with G-Cter in SUMO2) linkage. Ser-170 is subject to Phosphoserine. Glycyl lysine isopeptide (Lys-Gly) (interchain with G-Cter in SUMO2) cross-links involve residues Lys-174, Lys-217, and Lys-310. Residues 267 to 341 (RRGSRFTWRK…NRRKEIKRRA (75 aa)) constitute a DNA-binding region (homeobox). The interval 352-384 (IDVQSPGGHSNSDDVDGNDYSEQDDSTSHSDHQ) is disordered. Acidic residues predominate over residues 364–376 (DDVDGNDYSEQDD). A Glycyl lysine isopeptide (Lys-Gly) (interchain with G-Cter in SUMO1); alternate cross-link involves residue Lys-412. Residue Lys-412 forms a Glycyl lysine isopeptide (Lys-Gly) (interchain with G-Cter in SUMO2); alternate linkage.

As to quaternary structure, associates with the telomerase holoenzyme complex. Interacts with DKC1, XRCC6 and COIL.

Its subcellular location is the nucleus. The protein localises to the cytoplasm. The protein resides in the chromosome. It localises to the telomere. It is found in the cajal body. Its subcellular location is the PML body. Binds directly to 5'-TTAGGG-3' repeats in telomeric DNA. Associates with the telomerase complex at sites of active telomere processing and positively regulates telomere elongation. Important for TERT binding to chromatin, indicating a role in recruitment of the telomerase complex to telomeres. Also plays a role in the alternative lengthening of telomeres (ALT) pathway in telomerase-negative cells where it promotes formation and/or maintenance of ALT-associated promyelocytic leukemia bodies (APBs). Enhances formation of telomere C-circles in ALT cells, suggesting a possible role in telomere recombination. Might also be involved in the DNA damage response at telomeres. In Mus musculus (Mouse), this protein is Homeobox-containing protein 1 (Hmbox1).